Reading from the N-terminus, the 425-residue chain is UDP-N-acetylglucosamine 1-carboxyvinyltransferase (425 aa).

Position 22–23 (22–23 (KN)) interacts with phosphoenolpyruvate. Arginine 91 provides a ligand contact to UDP-N-acetyl-alpha-D-glucosamine. The Proton donor role is filled by cysteine 115. Cysteine 115 is subject to 2-(S-cysteinyl)pyruvic acid O-phosphothioketal. UDP-N-acetyl-alpha-D-glucosamine contacts are provided by residues 120 to 124 (RPVDL), aspartate 309, and isoleucine 331.

Belongs to the EPSP synthase family. MurA subfamily.

The protein localises to the cytoplasm. It catalyses the reaction phosphoenolpyruvate + UDP-N-acetyl-alpha-D-glucosamine = UDP-N-acetyl-3-O-(1-carboxyvinyl)-alpha-D-glucosamine + phosphate. The protein operates within cell wall biogenesis; peptidoglycan biosynthesis. In terms of biological role, cell wall formation. Adds enolpyruvyl to UDP-N-acetylglucosamine. The chain is UDP-N-acetylglucosamine 1-carboxyvinyltransferase from Akkermansia muciniphila (strain ATCC BAA-835 / DSM 22959 / JCM 33894 / BCRC 81048 / CCUG 64013 / CIP 107961 / Muc).